Consider the following 229-residue polypeptide: Enolase-phosphatase E1 (229 aa).

Residues Arg-207–Ala-229 form a disordered region. The span at Arg-218–Ala-229 shows a compositional bias: basic and acidic residues.

This sequence belongs to the HAD-like hydrolase superfamily. MasA/MtnC family. Monomer. It depends on Mg(2+) as a cofactor.

It carries out the reaction 5-methylsulfanyl-2,3-dioxopentyl phosphate + H2O = 1,2-dihydroxy-5-(methylsulfanyl)pent-1-en-3-one + phosphate. Its pathway is amino-acid biosynthesis; L-methionine biosynthesis via salvage pathway; L-methionine from S-methyl-5-thio-alpha-D-ribose 1-phosphate: step 3/6. It participates in amino-acid biosynthesis; L-methionine biosynthesis via salvage pathway; L-methionine from S-methyl-5-thio-alpha-D-ribose 1-phosphate: step 4/6. In terms of biological role, bifunctional enzyme that catalyzes the enolization of 2,3-diketo-5-methylthiopentyl-1-phosphate (DK-MTP-1-P) into the intermediate 2-hydroxy-3-keto-5-methylthiopentenyl-1-phosphate (HK-MTPenyl-1-P), which is then dephosphorylated to form the acireductone 1,2-dihydroxy-3-keto-5-methylthiopentene (DHK-MTPene). This chain is Enolase-phosphatase E1, found in Klebsiella pneumoniae subsp. pneumoniae (strain ATCC 700721 / MGH 78578).